The chain runs to 122 residues: Large ribosomal subunit protein uL14c (122 aa).

It belongs to the universal ribosomal protein uL14 family. As to quaternary structure, part of the 50S ribosomal subunit.

It is found in the plastid. It localises to the chloroplast. In terms of biological role, binds to 23S rRNA. This chain is Large ribosomal subunit protein uL14c, found in Chlorokybus atmophyticus (Soil alga).